The primary structure comprises 124 residues: Small ribosomal subunit protein uS12 (124 aa).

D90 is subject to 3-methylthioaspartic acid.

This sequence belongs to the universal ribosomal protein uS12 family. Part of the 30S ribosomal subunit. Contacts proteins S8 and S17. May interact with IF1 in the 30S initiation complex.

In terms of biological role, with S4 and S5 plays an important role in translational accuracy. Its function is as follows. Interacts with and stabilizes bases of the 16S rRNA that are involved in tRNA selection in the A site and with the mRNA backbone. Located at the interface of the 30S and 50S subunits, it traverses the body of the 30S subunit contacting proteins on the other side and probably holding the rRNA structure together. The combined cluster of proteins S8, S12 and S17 appears to hold together the shoulder and platform of the 30S subunit. In Wolbachia sp. subsp. Brugia malayi (strain TRS), this protein is Small ribosomal subunit protein uS12.